Consider the following 200-residue polypeptide: Large ribosomal subunit protein uL4 (200 aa).

A disordered region spans residues 38–68; it reads GRQGSKQQKTRSDVRGGGKRPWRQKGTGRAR. Residues 54-65 show a composition bias toward basic residues; it reads GGKRPWRQKGTG.

The protein belongs to the universal ribosomal protein uL4 family. As to quaternary structure, part of the 50S ribosomal subunit.

Its function is as follows. One of the primary rRNA binding proteins, this protein initially binds near the 5'-end of the 23S rRNA. It is important during the early stages of 50S assembly. It makes multiple contacts with different domains of the 23S rRNA in the assembled 50S subunit and ribosome. Forms part of the polypeptide exit tunnel. The chain is Large ribosomal subunit protein uL4 from Pseudomonas syringae pv. tomato (strain ATCC BAA-871 / DC3000).